The primary structure comprises 224 residues: Cysteine S-methyltransferase NleE (224 aa).

Residues 49 to 52 (GITR) form an interaction with host proteins TAB2, TAB3 and ZRANB3 region. Positions 92, 98, 107, 111, 204, and 208 each coordinate S-adenosyl-L-methionine.

It belongs to the NleE/OspZ family. As to quaternary structure, monomer.

The protein resides in the secreted. The protein localises to the host nucleus. The enzyme catalyses L-cysteinyl-[protein] + S-adenosyl-L-methionine = S-methyl-L-cysteinyl-[protein] + S-adenosyl-L-homocysteine + H(+). Functionally, cysteine methyltransferase effector that inhibits host cell NF-kappa-B activation by preventing nuclear translocation of host protein RELA/p65. Acts by mediating cysteine methylation of host proteins TAB2 and TAB3: methylation of a conserved cysteine residue of the RanBP2-type zinc finger (NZF) of TAB2 and TAB3 disrupts zinc-binding, thereby inactivating the ubiquitin chain-binding activity of TAB2 and TAB3, leading to NF-kappa-B inactivation. Also mediates cysteine methylation of host protein ZRANB3, inactivating its ability to bind ubiquitin chains. This chain is Cysteine S-methyltransferase NleE, found in Escherichia coli O157:H7.